Reading from the N-terminus, the 558-residue chain is Formate--tetrahydrofolate ligase (558 aa).

66-73 provides a ligand contact to ATP; it reads TPAGEGKT.

Belongs to the formate--tetrahydrofolate ligase family.

The catalysed reaction is (6S)-5,6,7,8-tetrahydrofolate + formate + ATP = (6R)-10-formyltetrahydrofolate + ADP + phosphate. Its pathway is one-carbon metabolism; tetrahydrofolate interconversion. This Neisseria meningitidis serogroup C (strain 053442) protein is Formate--tetrahydrofolate ligase.